We begin with the raw amino-acid sequence, 514 residues long: Peptide chain release factor 3 (514 aa).

The 261-residue stretch at 8–268 (KKRRTFAIIS…TFLEFAPEPH (261 aa)) folds into the tr-type G domain. Residues 17–24 (SHPDAGKT), 85–89 (DTPGH), and 139–142 (NKLD) each bind GTP.

It belongs to the TRAFAC class translation factor GTPase superfamily. Classic translation factor GTPase family. PrfC subfamily.

It localises to the cytoplasm. Functionally, increases the formation of ribosomal termination complexes and stimulates activities of RF-1 and RF-2. It binds guanine nucleotides and has strong preference for UGA stop codons. It may interact directly with the ribosome. The stimulation of RF-1 and RF-2 is significantly reduced by GTP and GDP, but not by GMP. The polypeptide is Peptide chain release factor 3 (Streptococcus pyogenes serotype M2 (strain MGAS10270)).